Reading from the N-terminus, the 297-residue chain is Homoserine kinase (297 aa).

82–92 (PLTRGLGSSAS) is an ATP binding site.

Belongs to the GHMP kinase family. Homoserine kinase subfamily.

It localises to the cytoplasm. The catalysed reaction is L-homoserine + ATP = O-phospho-L-homoserine + ADP + H(+). It functions in the pathway amino-acid biosynthesis; L-threonine biosynthesis; L-threonine from L-aspartate: step 4/5. Functionally, catalyzes the ATP-dependent phosphorylation of L-homoserine to L-homoserine phosphate. This chain is Homoserine kinase, found in Bacillus cereus (strain G9842).